The chain runs to 284 residues: uncharacterized protein (284 aa).

Residues 1-23 form the signal peptide; sequence MKRGCAIAVMICGLITSVSAASA.

It belongs to the surface antigen msp4 family.

This is an uncharacterized protein from Brucella abortus (strain 2308).